The sequence spans 377 residues: Beta sliding clamp (377 aa).

The protein belongs to the beta sliding clamp family. As to quaternary structure, forms a ring-shaped head-to-tail homodimer around DNA which binds and tethers DNA polymerases and other proteins to the DNA. The DNA replisome complex has a single clamp-loading complex (3 tau and 1 each of delta, delta', psi and chi subunits) which binds 3 Pol III cores (1 core on the leading strand and 2 on the lagging strand) each with a beta sliding clamp dimer. Additional proteins in the replisome are other copies of gamma, psi and chi, Ssb, DNA helicase and RNA primase.

Its subcellular location is the cytoplasm. Confers DNA tethering and processivity to DNA polymerases and other proteins. Acts as a clamp, forming a ring around DNA (a reaction catalyzed by the clamp-loading complex) which diffuses in an ATP-independent manner freely and bidirectionally along dsDNA. Initially characterized for its ability to contact the catalytic subunit of DNA polymerase III (Pol III), a complex, multichain enzyme responsible for most of the replicative synthesis in bacteria; Pol III exhibits 3'-5' exonuclease proofreading activity. The beta chain is required for initiation of replication as well as for processivity of DNA replication. The chain is Beta sliding clamp (dnaN) from Staphylococcus aureus (strain COL).